The primary structure comprises 239 residues: Putative 3-methyladenine DNA glycosylase (239 aa).

The protein belongs to the DNA glycosylase MPG family.

The chain is Putative 3-methyladenine DNA glycosylase from Pseudomonas aeruginosa (strain UCBPP-PA14).